The sequence spans 304 residues: Murein tetrapeptide carboxypeptidase (304 aa).

Catalysis depends on S106, which acts as the Nucleophile. Residues E200 and H270 each act as charge relay system in the active site.

It belongs to the peptidase S66 family.

The protein localises to the cytoplasm. The enzyme catalyses N-acetyl-D-glucosaminyl-N-acetylmuramoyl-L-alanyl-meso-2,6-diaminoheptanedioyl-D-alanine + H2O = N-acetyl-D-glucosaminyl-N-acetylmuramoyl-L-alanyl-meso-2,6-diaminoheptanedioate + D-alanine. It functions in the pathway cell wall biogenesis; peptidoglycan recycling. Functionally, releases the terminal D-alanine residue from the cytoplasmic tetrapeptide recycling product L-Ala-gamma-D-Glu-meso-Dap-D-Ala. Can also cleave D-Ala from murein derivatives containing the tetrapeptide, i.e. MurNAc-tetrapeptide, UDP-MurNAc-tetrapeptide, GlcNAc-MurNAc-tetrapeptide, and GlcNAc-anhMurNAc-tetrapeptide. Does not act on murein sacculi or cross-linked muropeptides. The tripeptides produced by the LcdA reaction can then be reused as peptidoglycan building blocks; LcdA is thereby involved in murein recycling. The sequence is that of Murein tetrapeptide carboxypeptidase (ldcA) from Escherichia coli O157:H7.